The following is a 274-amino-acid chain: Large ribosomal subunit protein uL2 (274 aa).

The segment at 225–274 (MNPVDHPHGGGEGRSPIGRHPVTPWGKPTLGVKTRKKNKASSKLIIKRRK) is disordered. The span at 257–274 (KTRKKNKASSKLIIKRRK) shows a compositional bias: basic residues.

It belongs to the universal ribosomal protein uL2 family. Part of the 50S ribosomal subunit. Forms a bridge to the 30S subunit in the 70S ribosome.

In terms of biological role, one of the primary rRNA binding proteins. Required for association of the 30S and 50S subunits to form the 70S ribosome, for tRNA binding and peptide bond formation. It has been suggested to have peptidyltransferase activity; this is somewhat controversial. Makes several contacts with the 16S rRNA in the 70S ribosome. The sequence is that of Large ribosomal subunit protein uL2 from Carboxydothermus hydrogenoformans (strain ATCC BAA-161 / DSM 6008 / Z-2901).